Consider the following 155-residue polypeptide: Ribonuclease H (155 aa).

The RNase H type-1 domain occupies 1–142 (MLKQVEIFTD…CDELARNAAG (142 aa)). Mg(2+)-binding residues include D10, E48, D70, and D134.

This sequence belongs to the RNase H family. In terms of assembly, monomer. Mg(2+) is required as a cofactor.

Its subcellular location is the cytoplasm. It catalyses the reaction Endonucleolytic cleavage to 5'-phosphomonoester.. Endonuclease that specifically degrades the RNA of RNA-DNA hybrids. This chain is Ribonuclease H, found in Erwinia tasmaniensis (strain DSM 17950 / CFBP 7177 / CIP 109463 / NCPPB 4357 / Et1/99).